The chain runs to 256 residues: Triosephosphate isomerase (256 aa).

12-14 (NWK) contributes to the substrate binding site. The active-site Electrophile is H99. Residue E169 is the Proton acceptor of the active site. Substrate contacts are provided by residues G175, S214, and 235–236 (GG).

It belongs to the triosephosphate isomerase family. Homodimer.

It is found in the cytoplasm. The enzyme catalyses D-glyceraldehyde 3-phosphate = dihydroxyacetone phosphate. The protein operates within carbohydrate biosynthesis; gluconeogenesis. It participates in carbohydrate degradation; glycolysis; D-glyceraldehyde 3-phosphate from glycerone phosphate: step 1/1. Its function is as follows. Involved in the gluconeogenesis. Catalyzes stereospecifically the conversion of dihydroxyacetone phosphate (DHAP) to D-glyceraldehyde-3-phosphate (G3P). The polypeptide is Triosephosphate isomerase (Rhizobium meliloti (strain 1021) (Ensifer meliloti)).